The primary structure comprises 82 residues: ATP synthase subunit 9, mitochondrial (82 aa).

A run of 2 helical transmembrane segments spans residues 8–28 and 45–67; these read IGAGAATIASAGAAIGIGNVF and SFGYAILGFALTEAIASFAPMMA.

The protein belongs to the ATPase C chain family. F-type ATPases have 2 components, CF(1) - the catalytic core - and CF(0) - the membrane proton channel. CF(1) has five subunits: alpha(3), beta(3), gamma(1), delta(1), epsilon(1). CF(0) has three main subunits: a, b and c.

It is found in the mitochondrion membrane. Its function is as follows. This protein is one of the chains of the nonenzymatic membrane component (F0) of mitochondrial ATPase. This Malus domestica (Apple) protein is ATP synthase subunit 9, mitochondrial (ATP9).